Here is a 199-residue protein sequence, read N- to C-terminus: Glycerol-3-phosphate acyltransferase (199 aa).

5 helical membrane-spanning segments follow: residues 4 to 24, 56 to 76, 80 to 100, 115 to 135, and 154 to 176; these read FALF…AILI, LAVL…GYYL, QFEL…PIFF, IAPI…FVFL, and YVWW…LIYR.

Belongs to the PlsY family. Probably interacts with PlsX.

Its subcellular location is the cell inner membrane. It catalyses the reaction an acyl phosphate + sn-glycerol 3-phosphate = a 1-acyl-sn-glycero-3-phosphate + phosphate. Its pathway is lipid metabolism; phospholipid metabolism. Functionally, catalyzes the transfer of an acyl group from acyl-phosphate (acyl-PO(4)) to glycerol-3-phosphate (G3P) to form lysophosphatidic acid (LPA). This enzyme utilizes acyl-phosphate as fatty acyl donor, but not acyl-CoA or acyl-ACP. This Haemophilus influenzae (strain PittGG) protein is Glycerol-3-phosphate acyltransferase.